We begin with the raw amino-acid sequence, 943 residues long: Conidiophore development regulator abaA (943 aa).

Disordered regions lie at residues 1–69 (MSSS…FNGG) and 111–133 (TSRQ…HQRG). Residues 29–43 (IDTRRSFHGDSRLPL) show a composition bias toward basic and acidic residues. The span at 59–68 (PSSAHSSFNG) shows a compositional bias: polar residues. The TEA DNA-binding region spans 161–254 (QKDKGGVWRR…QVVKKFFEDL (94 aa)). Over residues 537–555 (EHQRKKEKRSCGKKPDLER) the composition is skewed to basic and acidic residues. Disordered stretches follow at residues 537–575 (EHQR…AAWT) and 809–901 (GAAG…HHPG). A compositionally biased stretch (low complexity) spans 865–889 (DSWTAGSSAGGAPAATPTGPDWGPT).

Belongs to the TEC1 family.

It localises to the nucleus. Its function is as follows. BrlA, abaA and wetA are pivotal regulators of conidiophore development and conidium maturation. They act individually and together to regulate their own expression and that of numerous other sporulation-specific genes. Binds to the sequence 5'-CATTCY-3', where Y is a pyrimidine, making both major- and minor-groove contacts. This is Conidiophore development regulator abaA from Hapsidospora chrysogena (Acremonium chrysogenum).